The following is a 102-amino-acid chain: S-phase delaying protein 2 (102 aa).

The tract at residues 43-62 is disordered; that stretch reads FPSYHKDQTDRNELPQQKHD. Residues 46-62 are compositionally biased toward basic and acidic residues; it reads YHKDQTDRNELPQQKHD.

This sequence belongs to the DIF1/spd1 family.

The protein resides in the cytoplasm. Its subcellular location is the nucleus. Functionally, regulates the ribonucleotide reductase activity. The protein is S-phase delaying protein 2 (spd2) of Schizosaccharomyces pombe (strain 972 / ATCC 24843) (Fission yeast).